The sequence spans 307 residues: MmsAB operon regulatory protein (307 aa).

The HTH araC/xylS-type domain maps to 201–299 (DGLHAYMREH…GLSPSAYRQR (99 aa)). 2 DNA-binding regions (H-T-H motif) span residues 218-239 (ERLAAFCNLSKFHFVSRYKAIT) and 266-289 (VARVGQAVGYDDSYYFSRLFSKVM).

In terms of biological role, regulatory protein for the mmsAB operon. Activates the transcription of the mmsAB genes. The polypeptide is MmsAB operon regulatory protein (Pseudomonas aeruginosa (strain ATCC 15692 / DSM 22644 / CIP 104116 / JCM 14847 / LMG 12228 / 1C / PRS 101 / PAO1)).